A 476-amino-acid chain; its full sequence is Aspartyl/glutamyl-tRNA(Asn/Gln) amidotransferase subunit B (476 aa).

Belongs to the GatB/GatE family. GatB subfamily. In terms of assembly, heterotrimer of A, B and C subunits.

It carries out the reaction L-glutamyl-tRNA(Gln) + L-glutamine + ATP + H2O = L-glutaminyl-tRNA(Gln) + L-glutamate + ADP + phosphate + H(+). The catalysed reaction is L-aspartyl-tRNA(Asn) + L-glutamine + ATP + H2O = L-asparaginyl-tRNA(Asn) + L-glutamate + ADP + phosphate + 2 H(+). Its function is as follows. Allows the formation of correctly charged Asn-tRNA(Asn) or Gln-tRNA(Gln) through the transamidation of misacylated Asp-tRNA(Asn) or Glu-tRNA(Gln) in organisms which lack either or both of asparaginyl-tRNA or glutaminyl-tRNA synthetases. The reaction takes place in the presence of glutamine and ATP through an activated phospho-Asp-tRNA(Asn) or phospho-Glu-tRNA(Gln). This chain is Aspartyl/glutamyl-tRNA(Asn/Gln) amidotransferase subunit B, found in Neisseria meningitidis serogroup A / serotype 4A (strain DSM 15465 / Z2491).